A 498-amino-acid polypeptide reads, in one-letter code: ATP synthase subunit beta, chloroplastic (498 aa).

172 to 179 (GGAGVGKT) is an ATP binding site.

The protein belongs to the ATPase alpha/beta chains family. In terms of assembly, F-type ATPases have 2 components, CF(1) - the catalytic core - and CF(0) - the membrane proton channel. CF(1) has five subunits: alpha(3), beta(3), gamma(1), delta(1), epsilon(1). CF(0) has four main subunits: a(1), b(1), b'(1) and c(9-12).

It is found in the plastid. Its subcellular location is the chloroplast thylakoid membrane. The enzyme catalyses ATP + H2O + 4 H(+)(in) = ADP + phosphate + 5 H(+)(out). Produces ATP from ADP in the presence of a proton gradient across the membrane. The catalytic sites are hosted primarily by the beta subunits. The polypeptide is ATP synthase subunit beta, chloroplastic (Vitis vinifera (Grape)).